A 620-amino-acid chain; its full sequence is MTLDSSKYPLLNLVNEPAHLRDLAQDKLPAFSHELRDYLLNSVSQSSGHLASGLGTVELTVALHYVYNTPDDRLVWDVGHQAYPHKILTGRRDLMHTIRKKDGLHPFPFREESQYDTFSVGHSSTSISAALGMSIAAQKEGKGRKTVAVIGDGAITAGMAFEAMNHLGDVKSDMLIILNDNEMSISENVGALTNHFARILSGSFYTNIREGSKKLLSGVPPVKQLASKMEEHIKGMMIPGTFFEELGLNYIGPIDGHDVNMLVDTLRNMRNLKGPQLLHIKTQKGKGYKPAEADPIGYHGVPKFDPNTSSLPKSKPGAATFSNVFGDWLCDIAKQDSKLMAITPAMREGSGMVRFSKEHPDQYFDVAIAEQHAVTLAAGFACEGLKPVVAIYSSFLQRAYDQLIHDVALQNLPVLFAIDRAGIVGADGETHQGAYDLSFMRCIPNMVIMAPSDTNECRHMLYTGYQANCPVAVRYPRGSAGTAEIATNMQLLEIGKADVVKQGAKVAILSFGTLLENAQLAADELNATLVNMRFIKPLDTALLDELINSHDVIVTLEDNAISGGAGSAVNEYLATQKAQVSILNLGIPDEFIKHGTQDEMHDEMGLGEQGILTAIKAFIN.

Residues His80 and 121-123 each bind thiamine diphosphate; that span reads GHS. A Mg(2+)-binding site is contributed by Asp152. Thiamine diphosphate is bound by residues 153-154, Asn181, Tyr288, and Glu370; that span reads GA. Asn181 serves as a coordination point for Mg(2+).

This sequence belongs to the transketolase family. DXPS subfamily. Homodimer. Mg(2+) is required as a cofactor. Requires thiamine diphosphate as cofactor.

It carries out the reaction D-glyceraldehyde 3-phosphate + pyruvate + H(+) = 1-deoxy-D-xylulose 5-phosphate + CO2. It functions in the pathway metabolic intermediate biosynthesis; 1-deoxy-D-xylulose 5-phosphate biosynthesis; 1-deoxy-D-xylulose 5-phosphate from D-glyceraldehyde 3-phosphate and pyruvate: step 1/1. Catalyzes the acyloin condensation reaction between C atoms 2 and 3 of pyruvate and glyceraldehyde 3-phosphate to yield 1-deoxy-D-xylulose-5-phosphate (DXP). The sequence is that of 1-deoxy-D-xylulose-5-phosphate synthase from Pseudoalteromonas translucida (strain TAC 125).